The chain runs to 94 residues: Probable Fe(2+)-trafficking protein (94 aa).

Belongs to the Fe(2+)-trafficking protein family.

Could be a mediator in iron transactions between iron acquisition and iron-requiring processes, such as synthesis and/or repair of Fe-S clusters in biosynthetic enzymes. The chain is Probable Fe(2+)-trafficking protein from Marinomonas sp. (strain MWYL1).